Reading from the N-terminus, the 247-residue chain is Adenylyl-sulfate kinase (247 aa).

The segment at 1–24 (MSQSNSDDSASSSTQQAGDGQDDV) is disordered. 55–62 (GLSGCGKS) provides a ligand contact to ATP. The Phosphoserine intermediate role is filled by S146.

This sequence belongs to the APS kinase family.

It catalyses the reaction adenosine 5'-phosphosulfate + ATP = 3'-phosphoadenylyl sulfate + ADP + H(+). It participates in sulfur metabolism; hydrogen sulfide biosynthesis; sulfite from sulfate: step 2/3. Catalyzes the synthesis of activated sulfate. The chain is Adenylyl-sulfate kinase from Rhodopirellula baltica (strain DSM 10527 / NCIMB 13988 / SH1).